The primary structure comprises 98 residues: MTTVGVSLFRRSPEKITMKIAAFLGLSFLLIASYVLICEAQHPGFQELLILEENMRDPENSKERSCAKPRENCNRMNILCCRGECVCPTFGDCFCYGD.

The first 40 residues, 1–40 (MTTVGVSLFRRSPEKITMKIAAFLGLSFLLIASYVLICEA), serve as a signal peptide directing secretion. A propeptide spanning residues 41–64 (QHPGFQELLILEENMRDPENSKER) is cleaved from the precursor. Cystine bridges form between Cys66–Cys81, Cys73–Cys85, and Cys80–Cys95.

This sequence belongs to the hainantoxin family. 17 subfamily. In terms of tissue distribution, expressed by the venom gland.

It localises to the secreted. In terms of biological role, putative ion channel inhibitor. The sequence is that of Hainantoxin-XVII.2 from Cyriopagopus hainanus (Chinese bird spider).